The chain runs to 370 residues: 3-hydroxy-3-methylglutaryl-CoA lyase, cytoplasmic (370 aa).

Gly2 carries N-myristoyl glycine lipidation. The Pyruvate carboxyltransferase domain maps to 78–345 (VKIVEVGPRD…NTGVNLYKVM (268 aa)). Arg86 serves as a coordination point for substrate. Residues Asp87, His278, and His280 each coordinate a divalent metal cation. The active site involves Cys311. Asn320 lines the a divalent metal cation pocket.

Belongs to the HMG-CoA lyase family. A divalent metal cation is required as a cofactor.

The protein resides in the cytoplasm. Its subcellular location is the cytosol. It is found in the endoplasmic reticulum membrane. It catalyses the reaction (3S)-3-hydroxy-3-methylglutaryl-CoA = acetoacetate + acetyl-CoA. It participates in metabolic intermediate metabolism; (S)-3-hydroxy-3-methylglutaryl-CoA degradation; acetoacetate from (S)-3-hydroxy-3-methylglutaryl-CoA: step 1/1. Functionally, non-mitochondrial 3-hydroxy-3-methylglutaryl-CoA lyase that catalyzes a cation-dependent cleavage of (S)-3-hydroxy-3-methylglutaryl-CoA into acetyl-CoA and acetoacetate, a key step in ketogenesis, the products of which support energy production in nonhepatic animal tissues. This is 3-hydroxy-3-methylglutaryl-CoA lyase, cytoplasmic (HMGCLL1) from Homo sapiens (Human).